A 400-amino-acid polypeptide reads, in one-letter code: Poly(A) polymerase type 3 (400 aa).

ATP-binding positions include 97 to 99 (FGS), Thr106, 110 to 112 (DID), Asp164, Lys225, Tyr234, and 243 to 244 (GV). Positions 110, 112, and 164 each coordinate Mg(2+). A Nuclear localization signal motif is present at residues 382–390 (GEIINKNKK).

Belongs to the poly(A) polymerase family. As to quaternary structure, monomer. Mg(2+) is required as a cofactor. The cofactor is Mn(2+).

The protein localises to the nucleus. The enzyme catalyses RNA(n) + ATP = RNA(n)-3'-adenine ribonucleotide + diphosphate. In terms of biological role, polymerase that creates the 3'-poly(A) tail of mRNA's. May acquire specificity through interaction with a cleavage and polyadenylation factor (CPSF). In Xenopus laevis (African clawed frog), this protein is Poly(A) polymerase type 3.